The chain runs to 579 residues: MFS-type transporter ppz2 (579 aa).

The segment at 1-23 (MQTATALEDSANAPSPAASSQGQ) is disordered. Over residues 10 to 20 (SANAPSPAASS) the composition is skewed to low complexity. The N-linked (GlcNAc...) asparagine glycan is linked to Asn38. The next 14 membrane-spanning stretches (helical) occupy residues 48 to 68 (ALIM…NTII), 83 to 103 (AAYT…TMVW), 121 to 141 (LCFF…MLIA), 145 to 165 (IQGI…GDLF), 171 to 191 (GLYY…GPVV), 203 to 223 (WCFY…ILLL), 236 to 256 (IAAI…MILL), 269 to 289 (SATV…CFSW), 298 to 318 (LLPV…ACFI), 336 to 356 (AVLG…AVSI), 374 to 394 (LTPI…FIDL), 403 to 423 (IIVF…APMV), 438 to 460 (TSAY…QTVF), and 516 to 536 (SMWI…PFLG).

This sequence belongs to the major facilitator superfamily. TCR/Tet family.

Its subcellular location is the membrane. MFS-type transporter; part of the gene cluster that mediates the biosynthesis of pyrrolopyrazines, secondary metabolites showing insecticidal activity. Probably involved in the secretion of peramine and other pyrrolopyrazines. The protein is MFS-type transporter ppz2 of Metarhizium majus (strain ARSEF 297).